Reading from the N-terminus, the 395-residue chain is Acetate kinase 1 (395 aa).

Asparagine 8 provides a ligand contact to Mg(2+). Position 15 (lysine 15) interacts with ATP. Residue arginine 89 coordinates substrate. Aspartate 146 serves as the catalytic Proton donor/acceptor. Residues 206–210 (HIGNG), 283–285 (DMR), and 330–334 (GIGEN) each bind ATP. Glutamate 382 lines the Mg(2+) pocket.

The protein belongs to the acetokinase family. As to quaternary structure, homodimer. Mg(2+) is required as a cofactor. Mn(2+) serves as cofactor.

The protein localises to the cytoplasm. It carries out the reaction acetate + ATP = acetyl phosphate + ADP. It participates in metabolic intermediate biosynthesis; acetyl-CoA biosynthesis; acetyl-CoA from acetate: step 1/2. Functionally, catalyzes the formation of acetyl phosphate from acetate and ATP. Can also catalyze the reverse reaction. The protein is Acetate kinase 1 of Lactococcus lactis subsp. lactis (strain IL1403) (Streptococcus lactis).